We begin with the raw amino-acid sequence, 330 residues long: MSNVVVCALYKFVSLPHFESLREPLLSMMEQAEIKGTLLLASEGINGTVAGTQAAIDALLAWLNNQNGLENIVYKLSFDDEMPFYRTKVKLKKEIVTMGVEGIDPLKVVGTYVKPQDWNALISDPEVILVDTRNDYEVQIGTFKNAINPVTETFREFPDYVKQNLDPAKHKKVAMFCTGGIRCEKSTAYLKEQGFEEVYHLEGGILKYLEEVKQEESLWEGECFVFDNRVAVDHDLKKGQYDQCNACRMPITEAEKLSPAYVQGVSCPHCIDKISDEQRKRFVERERQVNLAKSRNEAHIGSDVNQVIEARRQKKEALRQQSAEKNKAKQ.

The Rhodanese domain occupies 123–217 (SDPEVILVDT…YLEEVKQEES (95 aa)). The Cysteine persulfide intermediate role is filled by cysteine 177.

Belongs to the TrhO family.

The catalysed reaction is uridine(34) in tRNA + AH2 + O2 = 5-hydroxyuridine(34) in tRNA + A + H2O. In terms of biological role, catalyzes oxygen-dependent 5-hydroxyuridine (ho5U) modification at position 34 in tRNAs. The protein is tRNA uridine(34) hydroxylase of Shewanella sp. (strain MR-4).